We begin with the raw amino-acid sequence, 128 residues long: Ribosome-binding factor A (128 aa).

It belongs to the RbfA family. As to quaternary structure, monomer. Binds 30S ribosomal subunits, but not 50S ribosomal subunits or 70S ribosomes.

The protein localises to the cytoplasm. Its function is as follows. One of several proteins that assist in the late maturation steps of the functional core of the 30S ribosomal subunit. Associates with free 30S ribosomal subunits (but not with 30S subunits that are part of 70S ribosomes or polysomes). Required for efficient processing of 16S rRNA. May interact with the 5'-terminal helix region of 16S rRNA. This chain is Ribosome-binding factor A, found in Rickettsia prowazekii (strain Madrid E).